We begin with the raw amino-acid sequence, 476 residues long: Argininosuccinate lyase (476 aa).

Low complexity predominate over residues 1–17 (MTDTGSSDTNTDTTGTS). The disordered stretch occupies residues 1 to 22 (MTDTGSSDTNTDTTGTSKANTM).

The protein belongs to the lyase 1 family. Argininosuccinate lyase subfamily.

The protein resides in the cytoplasm. The enzyme catalyses 2-(N(omega)-L-arginino)succinate = fumarate + L-arginine. It participates in amino-acid biosynthesis; L-arginine biosynthesis; L-arginine from L-ornithine and carbamoyl phosphate: step 3/3. This is Argininosuccinate lyase from Jannaschia sp. (strain CCS1).